The primary structure comprises 304 residues: Tyrosine recombinase XerD (304 aa).

The Core-binding (CB) domain occupies 6–91; sequence EPWRKTLETF…AIRSFHKFLL (86 aa). A Tyr recombinase domain is found at 112 to 298; that stretch reads YLPSVLTIEE…DRSFIKEVHK (187 aa). Residues arginine 155, lysine 179, histidine 250, arginine 253, and histidine 276 contribute to the active site. Tyrosine 285 functions as the O-(3'-phospho-DNA)-tyrosine intermediate in the catalytic mechanism.

The protein belongs to the 'phage' integrase family. XerD subfamily. As to quaternary structure, forms a cyclic heterotetrameric complex composed of two molecules of XerC and two molecules of XerD.

It localises to the cytoplasm. Its function is as follows. Site-specific tyrosine recombinase, which acts by catalyzing the cutting and rejoining of the recombining DNA molecules. The XerC-XerD complex is essential to convert dimers of the bacterial chromosome into monomers to permit their segregation at cell division. It also contributes to the segregational stability of plasmids. The protein is Tyrosine recombinase XerD of Chlorobaculum tepidum (strain ATCC 49652 / DSM 12025 / NBRC 103806 / TLS) (Chlorobium tepidum).